A 239-amino-acid polypeptide reads, in one-letter code: 2-C-methyl-D-erythritol 4-phosphate cytidylyltransferase (239 aa).

It belongs to the IspD/TarI cytidylyltransferase family. IspD subfamily.

The enzyme catalyses 2-C-methyl-D-erythritol 4-phosphate + CTP + H(+) = 4-CDP-2-C-methyl-D-erythritol + diphosphate. It participates in isoprenoid biosynthesis; isopentenyl diphosphate biosynthesis via DXP pathway; isopentenyl diphosphate from 1-deoxy-D-xylulose 5-phosphate: step 2/6. Catalyzes the formation of 4-diphosphocytidyl-2-C-methyl-D-erythritol from CTP and 2-C-methyl-D-erythritol 4-phosphate (MEP). This chain is 2-C-methyl-D-erythritol 4-phosphate cytidylyltransferase, found in Ruthia magnifica subsp. Calyptogena magnifica.